The chain runs to 265 residues: Ribosomal RNA small subunit methyltransferase A (265 aa).

The S-adenosyl-L-methionine site is built by His17, Leu19, Gly44, Glu65, Asp90, and Asn112.

This sequence belongs to the class I-like SAM-binding methyltransferase superfamily. rRNA adenine N(6)-methyltransferase family. RsmA subfamily.

It is found in the cytoplasm. The catalysed reaction is adenosine(1518)/adenosine(1519) in 16S rRNA + 4 S-adenosyl-L-methionine = N(6)-dimethyladenosine(1518)/N(6)-dimethyladenosine(1519) in 16S rRNA + 4 S-adenosyl-L-homocysteine + 4 H(+). In terms of biological role, specifically dimethylates two adjacent adenosines (A1518 and A1519) in the loop of a conserved hairpin near the 3'-end of 16S rRNA in the 30S particle. May play a critical role in biogenesis of 30S subunits. In Xylella fastidiosa (strain 9a5c), this protein is Ribosomal RNA small subunit methyltransferase A.